A 47-amino-acid chain; its full sequence is MTGELMLRLPCWSSFCEKTHPPLHPGTSLSSTASIACATHPHHTKGV.

This is an uncharacterized protein from Treponema pallidum (strain Nichols).